We begin with the raw amino-acid sequence, 545 residues long: Chaperonin GroEL (545 aa).

ATP is bound by residues 29 to 32, lysine 50, 86 to 90, glycine 413, 479 to 481, and aspartate 496; these read TLGP, DGTTT, and NAA. Residues 525–545 are disordered; the sequence is KPEKEKAPAAAGAPDMGGMDF. Over residues 532–545 the composition is skewed to low complexity; the sequence is PAAAGAPDMGGMDF.

It belongs to the chaperonin (HSP60) family. Forms a cylinder of 14 subunits composed of two heptameric rings stacked back-to-back. Interacts with the co-chaperonin GroES.

Its subcellular location is the cytoplasm. It catalyses the reaction ATP + H2O + a folded polypeptide = ADP + phosphate + an unfolded polypeptide.. In terms of biological role, together with its co-chaperonin GroES, plays an essential role in assisting protein folding. The GroEL-GroES system forms a nano-cage that allows encapsulation of the non-native substrate proteins and provides a physical environment optimized to promote and accelerate protein folding. The polypeptide is Chaperonin GroEL (Deinococcus geothermalis (strain DSM 11300 / CIP 105573 / AG-3a)).